The chain runs to 319 residues: MMVLKVEELVTGKKSSNGETGEFLPDDFRDGQYEAAVTSEKQEDLKTLPAHHVSLAEQQWEREKQLEAELKKKKLEQRSKLENLEDLEIIIQLKKRKKYRKTKVPVAKEPEPEIITEPVDVPRFLKAALENKLAVVEKFLSDQNNPDVCDEYKRTALHRACLEGHLAIVEKLMEAGAQIEFRDMLESTAIHWACRGGNLEVLKLLLNKGAKISARDKLLSTALHVAVRTGHYECAEHLIACEADLNAKDREGDTPLHDAVRLNRYKMIRLLIMYGADLTIKNSAGKTPMDLVLNWQNGTKAIFDSLKENSYKTSRIATF.

Residues glutamate 63–isoleucine 89 adopt a coiled-coil conformation. ANK repeat units follow at residues tyrosine 152–phenylalanine 181, leucine 185–alanine 214, leucine 218–alanine 247, glutamate 251–isoleucine 280, and alanine 284–arginine 315.

In terms of assembly, interacts with TTN/titin and YBX1.

It localises to the nucleus. May play an important role in endothelial cell activation. May act as a nuclear transcription factor that negatively regulates the expression of cardiac genes. This chain is Ankyrin repeat domain-containing protein 1 (ANKRD1), found in Oryctolagus cuniculus (Rabbit).